A 1342-amino-acid polypeptide reads, in one-letter code: MVYSYTEKKRIRKDFGKRDQVLDTPYLLSIQLDSFKQFIEADPEGEYGLEAAFRSVFPITSYSGSAELQYVSYRLGEPVFDVKECQIRGVTYSAPLRVKLRMVLYDREAAAGTVKDIKEQEVYMGEIPLMTENGTFVINGTERVIVSQLHRSPGVFFDHDKGKTHSSGKVLYNARVIPYRGSWLDFEFDAKDNLFVRIDRRRKLPASIILRALDFSSEEILANFFETIGFEVKDGKLMMDLVPERLRGETATFDIVANGAVVVETGRRVTARHIRQLEKDAVTQIEVPVEYVVGKVAAKNYTHPQTGEMVVTANQALSLEAVANLSQAGFKHFEVLFTNELDHGAYMSETLRIDSSSSRLEALVEIYRMMRPGEPPTREAAEQLFENLFFSSERYDLSTVGRMKFNRRLSREDETGAGTLTKDDIVEVMKRLIDIRNGNDEVDDIDHLGNRRIRSVGEMAENQFRVGLVRVERAVKERLSLGDLDTLMPQDLINAKPISAAVKEFFGSSQLSQFMDQNNPLSEVTHKRRISALGPGGLTRERAGFEVRDVHPTHYGRLCPIETPEGPNIGLINSLSVYSRTNEYGFLETPYRKVIDGVITDEVDYLSAIEEGKYVIAQANAATTEDGRLKDELIPCRHKGESTFMNADQIQYMDVSPQQIVSVAAALIPFLEHDDANRALMGSNMQRQAVPTLRADKPLVGTGMERAVAVDSGVTVVAKRGGMIDYVDASRIVIKVNEDELLPGEAGIDIYSLTKYTRSNQNTCINQRPCVMLGEPVMAGDVVADGPSTDLGELALGQNLRVAFMPWNGYNFEDSILVNERVVQEDRLTTIHIQELACISRDTKLGPEEITADIPNVGEAALSKLDESGIVYVGAEVKGGDILVGKVTPKGETQLTPEEKLLRAIFGEKASDVKDSSLRVPNGVYGTVVDVQVFTRDGVEKDKRAKEIEEMQLKEAKKDLTEEFKILEDGIFGRSRNLLLAAGYSEDRLNKLDRTKWFELAIEDEAKQIELEQIAEQHIELKADFDKKFENKRRKIIQGDDLAPGVLKIVKVYLAVKRRIQPGDKMAGRHGNKGVISKICPVEDMPHDEYGRPVDIVLNPLGVPSRMNIGQILEVHLGLAAKGIGEKIDRMIKEQRALHEMRDFLQQVYDLGEKDTKQVDIAELSDDDVRTLVGNLRKGLPVATPVFDGAKEHEIKALLKLADLPESGQISLFDGRTGNVFERKVTVGYMYMLKLNHLVDDKMHARSTGSYSLVTQQPLGGKAQFGGQRFGEMEVWALEAYGAAYTLQEMLTVKSDDVNGRTKMYKNIVDGDHRMEPGMPESFNVLLKEIRSLGINIELDEE.

Belongs to the RNA polymerase beta chain family. The RNAP catalytic core consists of 2 alpha, 1 beta, 1 beta' and 1 omega subunit. When a sigma factor is associated with the core the holoenzyme is formed, which can initiate transcription.

It catalyses the reaction RNA(n) + a ribonucleoside 5'-triphosphate = RNA(n+1) + diphosphate. Functionally, DNA-dependent RNA polymerase catalyzes the transcription of DNA into RNA using the four ribonucleoside triphosphates as substrates. This chain is DNA-directed RNA polymerase subunit beta, found in Aeromonas salmonicida (strain A449).